We begin with the raw amino-acid sequence, 121 residues long: MLTKKEQRLRRARQTRIRIATQGVARLTVNRTNLHIYASVISGDGVKVLASASTAEAEVRKALGGSGKGGNVAAAQAIGKRLAEKAKAVGVEKVAFDRAGFAYHGRVKALADAAREAGLQF.

The protein belongs to the universal ribosomal protein uL18 family. In terms of assembly, part of the 50S ribosomal subunit; part of the 5S rRNA/L5/L18/L25 subcomplex. Contacts the 5S and 23S rRNAs.

This is one of the proteins that bind and probably mediate the attachment of the 5S RNA into the large ribosomal subunit, where it forms part of the central protuberance. The protein is Large ribosomal subunit protein uL18 of Albidiferax ferrireducens (strain ATCC BAA-621 / DSM 15236 / T118) (Rhodoferax ferrireducens).